A 367-amino-acid chain; its full sequence is Nociceptin receptor (367 aa).

At 1–45 (MESLFPAPFWEVLYGSHFQGNLSLLNETVPHHLLLNASHSAFLPL) the chain is on the extracellular side. 3 N-linked (GlcNAc...) asparagine glycosylation sites follow: Asn-21, Asn-26, and Asn-36. Residues 46 to 71 (GLKVTIVGLYLAVCIGGLLGNCLVMY) traverse the membrane as a helical segment. At 72 to 84 (VILRHTKMKTATN) the chain is on the cytoplasmic side. The helical transmembrane segment at 85–106 (IYIFNLALADTLVLLTLPFQGT) threads the bilayer. Over 107–121 (DILLGFWPFGNALCK) the chain is Extracellular. A disulfide bridge links Cys-120 with Cys-197. A helical membrane pass occupies residues 122–143 (TVIAIDYYNMFTSTFTLTAMSV). The Cytoplasmic portion of the chain corresponds to 144-162 (DRYVAICHPIRALDVRTSS). The helical transmembrane segment at 163–185 (KAQAVNVAIWALASVVGVPVAIM) threads the bilayer. At 186–208 (GSAQVEDEEIECLVEIPAPQDYW) the chain is on the extracellular side. Residues 209 to 233 (GPVFAICIFLFSFIIPVLIISVCYS) form a helical membrane-spanning segment. Over 234–261 (LMIRRLRGVRLLSGSREKDRNLRRITRL) the chain is Cytoplasmic. The chain crosses the membrane as a helical span at residues 262-282 (VLVVVAVFVGCWTPVQVFVLV). Over 283–297 (QGLGVQPGSETAVAI) the chain is Extracellular. Residues 298-319 (LRFCTALGYVNSCLNPILYAFL) form a helical membrane-spanning segment. Residues 320–367 (DENFKACFRKFCCASALHREMQVSDRVRSIAKDVGLGCKTSETVPRPA) lie on the Cytoplasmic side of the membrane. A lipid anchor (S-palmitoyl cysteine) is attached at Cys-331.

It belongs to the G-protein coupled receptor 1 family. In terms of processing, phosphorylation at Ser-360 requires GRK3. In terms of tissue distribution, in the brain, isoform KOR3 and isoform KOR3C are most abundant in hypothalamus and periaqueductal gray. Isoform KOR3A is highly expressed in cortex, striatum and brainstem. Isoform KOR3D is highly expressed in cerebellum, hypothalamus and brainstem. Detected in spleen lymphocytes.

It localises to the cell membrane. The protein localises to the cytoplasmic vesicle. Its function is as follows. G-protein coupled opioid receptor that functions as a receptor for the endogenous neuropeptide nociceptin. Ligand binding causes a conformation change that triggers signaling via guanine nucleotide-binding proteins (G proteins) and modulates the activity of down-stream effectors. Signaling via G proteins mediates inhibition of adenylate cyclase activity and calcium channel activity. Arrestins modulate signaling via G proteins and mediate the activation of alternative signaling pathways that lead to the activation of MAP kinases. Plays a role in modulating nociception and the perception of pain. Plays a role in the regulation of locomotor activity by the neuropeptide nociceptin. The protein is Nociceptin receptor (Oprl1) of Mus musculus (Mouse).